A 1340-amino-acid chain; its full sequence is Protein SHORT ROOT IN SALT MEDIUM 1 (1340 aa).

6 disordered regions span residues 1–73, 161–185, 357–473, 723–750, 784–990, and 1063–1269; these read MHRD…RSHL, YGEQSSSYLGRELQNEPTRRYADPS, EEER…IRRS, TVEVTKDAEKKSPGDTSGTPTTGTKKTV, PETT…PPRA, and RNQR…KREE. The span at 7–39 shows a compositional bias: low complexity; the sequence is SSRGTGYGQQQYGSQSGYSQNLGSGYPGSSVSG. The segment covering 46–60 has biased composition (polar residues); that stretch reads QISLSSRHPSITGAP. Composition is skewed to basic and acidic residues over residues 173 to 182, 357 to 470, and 723 to 735; these read LQNEPTRRYA, EEER…EASI, and TVEVTKDAEKKSP. Positions 355–426 form a coiled coil; it reads LREEERRRED…RERKRALEIK (72 aa). The segment covering 810–824 has biased composition (polar residues); sequence GDTSDPSAKANEQTP. Positions 828-840 are enriched in basic residues; the sequence is IVKKKIIKRVAKR. 4 stretches are compositionally biased toward basic and acidic residues: residues 841–872, 887–988, 1069–1097, and 1105–1138; these read KVAEIDNKMDGDSKKDGDSDEKKVMEVGKKSS, EDVK…EEPP, HQEELSVKQNEAKSQDKRQKTAEHEDKEA, and PGKDDKETSGKETVDGSREIADKEAVAKTKETLG. Residues 1052–1086 adopt a coiled-coil conformation; sequence LKKLRVKIVRQRNQRKRHQEELSVKQNEAKSQDKR. Residues 1153 to 1204 are compositionally biased toward acidic residues; that stretch reads ENQDEEDDDGDDDPEEDPEEDPEEDPEEDPEEDPEECEEMDVANTEQEEPAE. 2 stretches are compositionally biased toward basic and acidic residues: residues 1205–1214 and 1229–1257; these read EPQKKEENLE and TDNRKEERGPNDSKTEIKPKSETEKHGKQ. An EF-hand domain is found at 1270–1305; it reads TVDKELLQAFRFFDRNQAGYVRVEDMRVTIHSLGKF.

As to quaternary structure, interacts with BHLH148/RITF1. In terms of tissue distribution, expressed ubiquitously at high levels, including in guard cells.

The protein resides in the nucleus. In terms of biological role, required for salt tolerance and sodium (Na) homeostasis after salt stress. Together with BHLH148/RITF1, regulates the transcription of several genes involved in the detoxification of reactive oxygen species (ROS) generated by salt (NaCl) stress. Binds calcium. This chain is Protein SHORT ROOT IN SALT MEDIUM 1, found in Arabidopsis thaliana (Mouse-ear cress).